Consider the following 202-residue polypeptide: ATP-dependent Clp protease proteolytic subunit (202 aa).

The active-site Nucleophile is the serine 101. The active site involves histidine 126.

It belongs to the peptidase S14 family. In terms of assembly, component of the chloroplastic Clp protease core complex.

The protein resides in the plastid. The protein localises to the chloroplast stroma. The enzyme catalyses Hydrolysis of proteins to small peptides in the presence of ATP and magnesium. alpha-casein is the usual test substrate. In the absence of ATP, only oligopeptides shorter than five residues are hydrolyzed (such as succinyl-Leu-Tyr-|-NHMec, and Leu-Tyr-Leu-|-Tyr-Trp, in which cleavage of the -Tyr-|-Leu- and -Tyr-|-Trp bonds also occurs).. Functionally, cleaves peptides in various proteins in a process that requires ATP hydrolysis. Has a chymotrypsin-like activity. Plays a major role in the degradation of misfolded proteins. The chain is ATP-dependent Clp protease proteolytic subunit from Drimys granadensis.